The following is a 485-amino-acid chain: Dual specificity protein phosphatase CDC14B (485 aa).

Residues 1–38 (MKRKSERRSAWATAPPCSRRSSSSSPGVKKSRSSTPQE) form a disordered region. Positions 1 to 54 (MKRKSERRSAWATAPPCSRRSSSSSPGVKKSRSSTPQELHRLEQQDDLYLDITD) match the Nucleolar localization signal motif. Positions 15–28 (PPCSRRSSSSSPGV) are enriched in low complexity. The segment at 44–198 (QQDDLYLDIT…AMQYGFFNFN (155 aa)) is a. The linker stretch occupies residues 199 to 212 (SFNLDEYEHYEKAE). Residues 213–379 (NGDFNWIIPE…EGDYFRQKLR (167 aa)) are b. One can recognise a Tyrosine-protein phosphatase domain in the interval 215 to 374 (DFNWIIPERF…SSLWLEGDYF (160 aa)). Residue Cys314 is the Phosphocysteine intermediate of the active site. Residues 402–424 (LNGLENQDNQEPEPYSDDDEVSG) are disordered. Positions 409–422 (DNQEPEPYSDDDEV) are enriched in acidic residues.

This sequence belongs to the protein-tyrosine phosphatase family. Non-receptor class CDC14 subfamily. In terms of assembly, interacts with FZR1/CDH1.

Its subcellular location is the nucleus. It localises to the nucleolus. The protein localises to the nucleoplasm. The catalysed reaction is O-phospho-L-tyrosyl-[protein] + H2O = L-tyrosyl-[protein] + phosphate. It carries out the reaction O-phospho-L-seryl-[protein] + H2O = L-seryl-[protein] + phosphate. The enzyme catalyses O-phospho-L-threonyl-[protein] + H2O = L-threonyl-[protein] + phosphate. Functionally, dual-specificity phosphatase involved in DNA damage response. Essential regulator of the G2 DNA damage checkpoint: following DNA damage, translocates to the nucleus and dephosphorylates FZR1/CDH1, a key activator of the anaphase promoting complex/cyclosome (APC/C). Dephosphorylates SIRT2 around early anaphase. Dephosphorylation of FZR1/CDH1 activates the APC/C, leading to the ubiquitination of PLK1, preventing entry into mitosis. Preferentially dephosphorylates proteins modified by proline-directed kinases. The protein is Dual specificity protein phosphatase CDC14B (Cdc14b) of Mus musculus (Mouse).